The following is a 238-amino-acid chain: Ribonuclease PH (238 aa).

Phosphate is bound by residues R86 and 124–126 (GTR).

Belongs to the RNase PH family. As to quaternary structure, homohexameric ring arranged as a trimer of dimers.

It carries out the reaction tRNA(n+1) + phosphate = tRNA(n) + a ribonucleoside 5'-diphosphate. Its function is as follows. Phosphorolytic 3'-5' exoribonuclease that plays an important role in tRNA 3'-end maturation. Removes nucleotide residues following the 3'-CCA terminus of tRNAs; can also add nucleotides to the ends of RNA molecules by using nucleoside diphosphates as substrates, but this may not be physiologically important. Probably plays a role in initiation of 16S rRNA degradation (leading to ribosome degradation) during starvation. The sequence is that of Ribonuclease PH from Geotalea uraniireducens (strain Rf4) (Geobacter uraniireducens).